Here is a 514-residue protein sequence, read N- to C-terminus: 2,3-bisphosphoglycerate-independent phosphoglycerate mutase (514 aa).

Mn(2+)-binding residues include aspartate 15 and serine 65. The Phosphoserine intermediate role is filled by serine 65. Substrate contacts are provided by residues histidine 126, 156 to 157, arginine 188, arginine 194, 261 to 264, and lysine 335; these read RD and RADR. The Mn(2+) site is built by aspartate 403, histidine 407, aspartate 444, histidine 445, and histidine 462.

The protein belongs to the BPG-independent phosphoglycerate mutase family. Monomer. The cofactor is Mn(2+).

It carries out the reaction (2R)-2-phosphoglycerate = (2R)-3-phosphoglycerate. The protein operates within carbohydrate degradation; glycolysis; pyruvate from D-glyceraldehyde 3-phosphate: step 3/5. Functionally, catalyzes the interconversion of 2-phosphoglycerate and 3-phosphoglycerate. In Syntrophotalea carbinolica (strain DSM 2380 / NBRC 103641 / GraBd1) (Pelobacter carbinolicus), this protein is 2,3-bisphosphoglycerate-independent phosphoglycerate mutase.